We begin with the raw amino-acid sequence, 168 residues long: Plasma membrane-associated cation-binding protein 2 (168 aa).

The N-myristoyl glycine moiety is linked to residue glycine 2. A run of 7 repeats spans residues 26-30, 69-73, 94-99, 103-107, 110-115, 118-122, and 124-129. Residues 26 to 129 form a 7 X 5 AA approximate repeats of V-E-E-K-K region; sequence VEEEKPREVE…EKKPVEEEKK (104 aa). Residues 56–77 adopt a coiled-coil conformation; it reads EEIIATGEKEIEIVEEKKEEAK. Positions 88–131 are enriched in basic and acidic residues; sequence EEKKPAVEEEKKTAPVEEKKPAVEEEKKPAVEEKKPVEEEKKEV. Residues 88-168 are disordered; it reads EEKKPAVEEE…ETPAAAPQKA (81 aa). A compositionally biased stretch (low complexity) spans 152-168; the sequence is ETPAKAPETPAAAPQKA.

This sequence belongs to the DREPP family. As to quaternary structure, binds microtubules. Interacts with calcium ion Ca(2+), calmodulin and some phosphatidylinositol phosphates (PtdInsPs) such as phosphatidylinositol 3,5-bisphosphate [PtdIns(3,5)P(2)], PtdIns(4,5)P(2) and PtdIns(3,4,5)P(3). The cofactor is Cu(2+). As to expression, mostly expressed in the expanding cells, specifically in roots (except in root tips) and flowers (at protein level). Also detected in cotyledons, hypocotyls and trichome stalks.

It localises to the cell membrane. It is found in the cytoplasm. The protein localises to the cytoskeleton. Its function is as follows. May be involved in intracellular signaling through interaction with PtdInsPs and calmodulin (CaM); may keep PtdInsPs attached to the plasma membrane until Ca(2+)-CaM reaches a competitive concentration subsequent to an increase triggered by a stimulus, thus leading to PtdInsPs release and subsequent activation of InsPs-dependent signaling cascade. Binds to microtubules and inhibits tubulin polymerization. Regulates directional cell growth and cortical microtubule organization by destabilizing microtubules (e.g. in cotyledon pavement cells). This is Plasma membrane-associated cation-binding protein 2 from Arabidopsis thaliana (Mouse-ear cress).